We begin with the raw amino-acid sequence, 190 residues long: Peptide deformylase (190 aa).

Residues Cys-94 and His-136 each contribute to the Fe cation site. The active site involves Glu-137. His-140 serves as a coordination point for Fe cation.

The protein belongs to the polypeptide deformylase family. Requires Fe(2+) as cofactor.

The catalysed reaction is N-terminal N-formyl-L-methionyl-[peptide] + H2O = N-terminal L-methionyl-[peptide] + formate. Removes the formyl group from the N-terminal Met of newly synthesized proteins. Requires at least a dipeptide for an efficient rate of reaction. N-terminal L-methionine is a prerequisite for activity but the enzyme has broad specificity at other positions. The sequence is that of Peptide deformylase from Chlorobium luteolum (strain DSM 273 / BCRC 81028 / 2530) (Pelodictyon luteolum).